We begin with the raw amino-acid sequence, 110 residues long: MKINENKKDIKDIVNEILISLNINESINIEIKPMKQKIASFSFKTKTLRLNKYVVENFDEELLHYIILHELIHFKIKSINHGIKFENELRNYFSKNECDEIELKIIQKLI.

The protein to M.jannaschii MJ1213 and A.aeolicus AA15.

This is an uncharacterized protein from Methanocaldococcus jannaschii (strain ATCC 43067 / DSM 2661 / JAL-1 / JCM 10045 / NBRC 100440) (Methanococcus jannaschii).